The chain runs to 245 residues: 8-amino-3,8-dideoxy-manno-octulosonate cytidylyltransferase (245 aa).

Belongs to the KdsB family.

It localises to the cytoplasm. The enzyme catalyses 8-amino-3,8-dideoxy-alpha-D-manno-octulosonate + CTP = CMP-8-amino-3,8-dideoxy-alpha-D-manno-oct-2-ulosonate + diphosphate. The protein operates within bacterial outer membrane biogenesis; lipopolysaccharide biosynthesis. Activates KDO8N (a required 8-carbon sugar) for incorporation into bacterial lipopolysaccharide in the Shewanella genus. The polypeptide is 8-amino-3,8-dideoxy-manno-octulosonate cytidylyltransferase (Shewanella woodyi (strain ATCC 51908 / MS32)).